A 378-amino-acid polypeptide reads, in one-letter code: Glutamate 5-kinase (378 aa).

Position 14 (lysine 14) interacts with ATP. Residues serine 54, aspartate 141, and asparagine 153 each coordinate substrate. 173–174 (SD) lines the ATP pocket. In terms of domain architecture, PUA spans 279–356 (AGRLTVDAGA…DEISEILGYD (78 aa)).

This sequence belongs to the glutamate 5-kinase family.

It localises to the cytoplasm. The enzyme catalyses L-glutamate + ATP = L-glutamyl 5-phosphate + ADP. It functions in the pathway amino-acid biosynthesis; L-proline biosynthesis; L-glutamate 5-semialdehyde from L-glutamate: step 1/2. Its function is as follows. Catalyzes the transfer of a phosphate group to glutamate to form L-glutamate 5-phosphate. In Brucella anthropi (strain ATCC 49188 / DSM 6882 / CCUG 24695 / JCM 21032 / LMG 3331 / NBRC 15819 / NCTC 12168 / Alc 37) (Ochrobactrum anthropi), this protein is Glutamate 5-kinase.